The chain runs to 242 residues: MKRVKTGIPGMDEILHGGIPERNVVLLSGGPGTGKSIFCQQFLYKGVVDYNEPSILVALEEHPVQIRENMRQFGWDIRKLEEEGKFAIIDAFTYGIGSAAKREKYVVNDPNDERELIDVLKTAINDIGAKRIGIDSVTTLYINKPMLARRTVFLLKRVISGLGCTAIFTSQISVGERGFGGPGVEHAVDGIIRLDLDEIDGELKRSLIVWKMRGTSHSLKRHPFDITNEGIIVYPDKVLKLR.

Residues 2–242 (KRVKTGIPGM…VYPDKVLKLR (241 aa)) form the KaiC domain. ATP is bound at residue 29 to 36 (GGPGTGKS).

The protein belongs to the UPF0273 family.

This is UPF0273 protein MJ1359 from Methanocaldococcus jannaschii (strain ATCC 43067 / DSM 2661 / JAL-1 / JCM 10045 / NBRC 100440) (Methanococcus jannaschii).